The sequence spans 66 residues: Large ribosomal subunit protein bL33c (66 aa).

The protein belongs to the bacterial ribosomal protein bL33 family.

The protein resides in the plastid. Its subcellular location is the chloroplast. This Oryza nivara (Indian wild rice) protein is Large ribosomal subunit protein bL33c.